The following is a 496-amino-acid chain: Probable malate:quinone oxidoreductase (496 aa).

The protein belongs to the MQO family. FAD serves as cofactor.

The enzyme catalyses (S)-malate + a quinone = a quinol + oxaloacetate. It participates in carbohydrate metabolism; tricarboxylic acid cycle; oxaloacetate from (S)-malate (quinone route): step 1/1. This Prochlorococcus marinus (strain MIT 9303) protein is Probable malate:quinone oxidoreductase.